Here is a 452-residue protein sequence, read N- to C-terminus: Mitochondrial import inner membrane translocase subunit TIM50 (452 aa).

A mitochondrion-targeting transit peptide spans 1-23; that stretch reads MSLSKLTQTCFSRHQAKTFIRLY. The Mitochondrial matrix portion of the chain corresponds to 24 to 167; that stretch reads SSDFKSLLGP…RRKRMERNTR (144 aa). Disordered stretches follow at residues 96–115 and 130–153; these read IEAEKVLSSPPPAPAPTSSA and ESAASKSSSSSGGSSDNSDPGNAE. Residues 131 to 144 are compositionally biased toward low complexity; the sequence is SAASKSSSSSGGSS. A helical membrane pass occupies residues 168–188; the sequence is IGAYVLFGGSIIGFISFCFYY. The Mitochondrial intermembrane segment spans residues 189–452; sequence GRAQRDEFGN…LFGSRRHVNA (264 aa). The region spanning 243–387 is the FCP1 homology domain; it reads YLQPKYTIVI…VDLAELLKTI (145 aa).

The protein belongs to the TIM50 family.

It is found in the mitochondrion inner membrane. In terms of biological role, essential component of the TIM23 complex, a complex that mediates the translocation of transit peptide-containing proteins across the mitochondrial inner membrane. This chain is Mitochondrial import inner membrane translocase subunit TIM50 (scpl-4), found in Caenorhabditis elegans.